Reading from the N-terminus, the 317-residue chain is MGAPKQRWTSEEEAALRAGIARHGVGKWRTILKDPEFSSTLCYRSNVDLKDKWRNMNVIVSTSSSRDKAKSALKRIRTIPKNNEHTMAITRVTSDIDDEIVDEKPIVSLPSEAKNTSSSKKSHRLDNIIMEAIKNLNEPTGSHRTTIANYIEEQYWPPSDFDHLLSAKLKDLSTSGKLIKVNRKYRIAPSSPNSERRSPKMPLLEDVQREPVKIWSDDTKTLTRSQVDAELARMATMTAEEASVAAARAVAEAEAIMAEAEAAAKEAEAAEAEAQAAQAFAEAAFLTLKNRNAGKLVIALIHASLCYILPCFISYHI.

The 61-residue stretch at 1–61 folds into the HTH myb-type domain; that stretch reads MGAPKQRWTS…KWRNMNVIVS (61 aa). Residues 28-57 constitute a DNA-binding region (H-T-H motif); the sequence is WRTILKDPEFSSTLCYRSNVDLKDKWRNMN. Residues 121-189 enclose the H15 domain; the sequence is KSHRLDNIIM…KVNRKYRIAP (69 aa). Positions 244-288 form a coiled coil; the sequence is VAAARAVAEAEAIMAEAEAAAKEAEAAEAEAQAAQAFAEAAFLTL.

The protein belongs to the histone H1/H5 family. SMH subfamily. As to quaternary structure, forms a homodimer and heterodimers.

Its subcellular location is the nucleus. It is found in the chromosome. The protein localises to the nucleolus. It localises to the telomere. Binds preferentially double-stranded telomeric repeats, but may also bind to the single telomeric strand. The protein is Single myb histone 6 (SMH6) of Zea mays (Maize).